We begin with the raw amino-acid sequence, 89 residues long: Phosphocarrier protein HPr (89 aa).

In terms of domain architecture, HPr spans 1–88 (MLEHELTVTN…ELFENRFNED (88 aa)). The Pros-phosphohistidine intermediate role is filled by histidine 15. The residue at position 46 (serine 46) is a Phosphoserine; by HPrK/P.

It belongs to the HPr family.

It localises to the cytoplasm. Phosphorylation on Ser-46 inhibits the phosphoryl transfer from enzyme I to HPr. In terms of biological role, general (non sugar-specific) component of the phosphoenolpyruvate-dependent sugar phosphotransferase system (sugar PTS). This major carbohydrate active-transport system catalyzes the phosphorylation of incoming sugar substrates concomitantly with their translocation across the cell membrane. The phosphoryl group from phosphoenolpyruvate (PEP) is transferred to the phosphoryl carrier protein HPr by enzyme I. Phospho-HPr then transfers it to the PTS EIIA domain. The chain is Phosphocarrier protein HPr (ptsH) from Xylella fastidiosa (strain Temecula1 / ATCC 700964).